The chain runs to 613 residues: Laccase 1 (613 aa).

The signal sequence occupies residues 1–20; that stretch reads MSRFARLLLIVALFFTGAWA. Plastocyanin-like domains are found at residues 29 to 142 and 171 to 359; these read ITWK…IRPK and YLVV…MRIP. A glycan (N-linked (GlcNAc...) asparagine) is linked at asparagine 74. Cu cation is bound by residues histidine 78, histidine 80, histidine 122, and histidine 124. Asparagine 256, asparagine 279, asparagine 444, asparagine 468, and asparagine 484 each carry an N-linked (GlcNAc...) asparagine glycan. One can recognise a Plastocyanin-like 3 domain in the interval 468–598; it reads NATRDTENDG…GGMGIAILDG (131 aa). Histidine 506, histidine 509, and histidine 511 together coordinate Cu cation. The N-linked (GlcNAc...) asparagine glycan is linked to asparagine 526. Cu cation is bound by residues histidine 580, cysteine 581, histidine 582, and histidine 586.

It belongs to the multicopper oxidase family. Requires Cu cation as cofactor.

It is found in the cell surface. Its pathway is pigment biosynthesis. Functionally, laccase; part of the Pks1 gene cluster that mediates the biosynthesis of an anthraquinone derivative pigment that contributes to conidial pigmentation that provides protection from UV radiation, heat and cold stress. The polyketide synthase Pks1 produces 1-acetyl-2,4,6,8-tetrahydroxy-9,10-anthraquinone though condensation of acetyl-CoA with malonyl-CoA. The dehydratase EthD and the laccase Mlac1 further convert the anthraquinone derivative into the final conidial pigment. This chain is Laccase 1, found in Metarhizium guizhouense (strain ARSEF 977).